Reading from the N-terminus, the 153-residue chain is MATACVKSLESVQCGTCEKTIANGTEFYALLFDKHPDLRHYFKGNENLTGADVKKSDHFKKQGQRLLLACHVLAHLENDPASFKAYAREIVDPHLRMSVHLEPKLWSEFWPIWLDYLSTKESVDDATKNAWLALGKKFSDECLDHLKNLGQPH.

In terms of domain architecture, Globin spans 1–147; the sequence is MATACVKSLE…FSDECLDHLK (147 aa). H94 contacts heme b.

The protein belongs to the globin family. Homodimer; disulfide-linked. The N-terminus is blocked. In terms of tissue distribution, body wall globin is localized in cellular compartments belonging to the hypodermis, the dorsal, ventral and lateral cords, the nerve ring, and body wall muscle.

The protein resides in the cytoplasm. Functionally, high oxygen affinity. Probably supplies oxygen needed for muscle activity. In Ascaris suum (Pig roundworm), this protein is Myoglobin.